A 487-amino-acid polypeptide reads, in one-letter code: Glycogen synthase (487 aa).

K19 contributes to the ADP-alpha-D-glucose binding site.

It belongs to the glycosyltransferase 1 family. Bacterial/plant glycogen synthase subfamily.

It carries out the reaction [(1-&gt;4)-alpha-D-glucosyl](n) + ADP-alpha-D-glucose = [(1-&gt;4)-alpha-D-glucosyl](n+1) + ADP + H(+). It participates in glycan biosynthesis; glycogen biosynthesis. Functionally, synthesizes alpha-1,4-glucan chains using ADP-glucose. This Moorella thermoacetica (strain ATCC 39073 / JCM 9320) protein is Glycogen synthase.